Consider the following 198-residue polypeptide: LexA repressor (198 aa).

A DNA-binding region (H-T-H motif) is located at residues Ile28–Leu47. Residues Ser120 and Lys157 each act as for autocatalytic cleavage activity in the active site.

The protein belongs to the peptidase S24 family. In terms of assembly, homodimer.

It carries out the reaction Hydrolysis of Ala-|-Gly bond in repressor LexA.. Its function is as follows. Represses a number of genes involved in the response to DNA damage (SOS response), including recA and lexA. In the presence of single-stranded DNA, RecA interacts with LexA causing an autocatalytic cleavage which disrupts the DNA-binding part of LexA, leading to derepression of the SOS regulon and eventually DNA repair. This chain is LexA repressor, found in Thermosipho africanus (strain TCF52B).